The sequence spans 126 residues: Large ribosomal subunit protein bL12 (126 aa).

Belongs to the bacterial ribosomal protein bL12 family. As to quaternary structure, homodimer. Part of the ribosomal stalk of the 50S ribosomal subunit. Forms a multimeric L10(L12)X complex, where L10 forms an elongated spine to which 2 to 4 L12 dimers bind in a sequential fashion. Binds GTP-bound translation factors.

Its function is as follows. Forms part of the ribosomal stalk which helps the ribosome interact with GTP-bound translation factors. Is thus essential for accurate translation. The sequence is that of Large ribosomal subunit protein bL12 from Acidovorax ebreus (strain TPSY) (Diaphorobacter sp. (strain TPSY)).